The primary structure comprises 303 residues: Oxygen-dependent coproporphyrinogen-III oxidase (303 aa).

Substrate is bound at residue Ser-93. The a divalent metal cation site is built by His-97 and His-107. His-107 acts as the Proton donor in catalysis. A substrate-binding site is contributed by 109 to 111 (NVR). Residues His-146 and His-176 each coordinate a divalent metal cation. Positions 241–276 (YVEFNLVYDRGTLFGLQSGGRTESILMSLPPQVRWG) are important for dimerization. A substrate-binding site is contributed by 259 to 261 (GGR).

This sequence belongs to the aerobic coproporphyrinogen-III oxidase family. Homodimer. A divalent metal cation serves as cofactor.

The protein localises to the cytoplasm. The enzyme catalyses coproporphyrinogen III + O2 + 2 H(+) = protoporphyrinogen IX + 2 CO2 + 2 H2O. Its pathway is porphyrin-containing compound metabolism; protoporphyrin-IX biosynthesis; protoporphyrinogen-IX from coproporphyrinogen-III (O2 route): step 1/1. Involved in the heme biosynthesis. Catalyzes the aerobic oxidative decarboxylation of propionate groups of rings A and B of coproporphyrinogen-III to yield the vinyl groups in protoporphyrinogen-IX. In Pseudomonas putida (strain ATCC 700007 / DSM 6899 / JCM 31910 / BCRC 17059 / LMG 24140 / F1), this protein is Oxygen-dependent coproporphyrinogen-III oxidase.